The following is a 270-amino-acid chain: Regulatory protein RecX (270 aa).

It belongs to the RecX family.

It is found in the cytoplasm. Modulates RecA activity. The chain is Regulatory protein RecX from Bacillus cereus (strain G9842).